A 1616-amino-acid polypeptide reads, in one-letter code: MPKTTKNKNKNTTPKSKTKKYLESANKKSVTKPKKEQDKVENLFDQPFLGEIKKNILKKTKSFNSKKKETVKSKSKSPIDFFDETKRGVFIVPPETDILSRRELNQKTVVNTVPNQTSSYPTINENKLVELNNQPETKVLETKKDSFTTTIREKKLNPEDSQAFWYIFVGDRKYGFWKNHTWVWLGYFDQLQRWNYFKVIETVEVPQEHAAFIKQRPADIDFWRPLVGNPNYGFVQNNTWIWKGFFDKKLNWIPDPVRFTEEALGHTDSLVDEIEKKTISEQPYWEQENDIVVTVFNTKSLASSLENELLLENSSEEQPVIEEVKPRRNEVIFRNPVTKLHFEKEKFEFLNPVKETNETIPLIEIVKEEVKVESEVEAPVEIEPEAACEPETTIPEVETVFVYEDDLKGLDSNQTQAGNVPEVETVFVYEDDLKGLDSIIKDDQQHDEIAKHVEHLSQDYSKEIKDSAKADLSNISDDIDSVWKEFGSFTDETQKSVEEKSQVDEIILDANNDFINESLFRDEVVNNIDSQINETVSEQQFEPTYSVNEFQQEFSEPVVSDEKIKETNSDESVNTDLTALFSEKLVNEVLLTNEYVDVNAPFSTETEVKVSSELPKSELVDEITFINNDPKPQEGLEYKVDFLETEPKSLFDEKTTIVVESEPPFIQPDLSLELDSVNDVDKSLETKTTSVELNHEEIGNEFINLDVSEKEVQEQPTTQLETDSEFVLPTYQIVEDSFTESAETPNEFSSEQKDTLEFISQTQEVETSESNVPTVEQETKLFEHQDENNLFTPLPLDLTEIIESNALFDSKPDEKESSDSELQPTFKEIKLDSTVEVPQESSQVEATFDTVQPEAVFDEIKTQELQPEATTEVVFDDHFQPDVQPEQTPQEAKFDSPVEIPQESSQAEFHAEQISDEIKLEEKTEAVFDHQQLENQSEETVVTPTEVTAFEPETIETQLEPSSEDQPSEPALDQNHPEIVTAEVEQIFDGTKLEDLKLEEANFDNVENNEVQPKETEAEITFDETKELQQETSSEPLSTEELKSEATFDNVSEAESEAVFEKPQLETQTEKILEEEPKSEPVDQLITEASFDTVKHEAVFDKNQTQTEGLEEPQVSSEAEVVDQTTTDTVGEPEAVFDVQPEKTTEVKFDDVENQQKVISEPQVEQQPGEAVFEPSAEAKFDSPVESVQDSQPEPVLEEVQTQPEIQPVESQPEATFDTVQPEQTPQEAKFDSPVETVEQPEFSSEPTQQHVESEASFDEPNYDFDEPNYDFDQPSYDSDLQPSEPQYDVDEPNYDFDEPNYEIESKPSEPQFEPQVEQQPGEAVFEPSAEAKFDSPVESVQDSQPEPLLEEVQTQPEIQPVESQPEATFDTVQPEQTPQEAKFDSPVETIQEPQVSSEPEVVVQPNFEERKPETVLEEPQADEIQPEASEEESLDWELLVGNNSYGHYEPDGEWVWAGFFGDDQKWNKDATVKWARERDYLPLIGDEVYGRYNNKGEWIWYGFYDESGDWVLVDEQWKNRQPRINEAPKFWEKLIGNEEYGYYEDNEWNWYDGEFDSEGNWLVFQSEETENLNEDITKDIPALEGYDIDSIDADEWLSQFSADDAKDVFGSNDKK.

Disordered regions lie at residues 1-41 (MPKT…DKVE), 878-909 (HFQP…QAEF), 931-975 (QQLE…LDQN), 1004-1083 (DNVE…EPVD), 1100-1132 (FDKN…TVGE), and 1159-1433 (ISEP…SEEE). The tract at residues 891 to 1389 (EAKFDSPVEI…QEAKFDSPVE (499 aa)) is 2 X 26 AA repeats. Over residues 938 to 952 (EETVVTPTEVTAFEP) the composition is skewed to low complexity. 2 stretches are compositionally biased toward basic and acidic residues: residues 1012 to 1029 (QPKE…KELQ) and 1059 to 1081 (VFEK…KSEP). A run of 2 repeats spans residues 1161–1186 (EPQV…SPVE) and 1205–1236 (EIQP…SPVE). Composition is skewed to polar residues over residues 1200–1227 (VQTQ…QTPQ) and 1242–1251 (EFSSEPTQQH). The segment at 1205-1389 (EIQPVESQPE…QEAKFDSPVE (185 aa)) is 2 X 32 AA repeats. Residues 1256–1270 (ASFDEPNYDFDEPNY) show a composition bias toward acidic residues. Over residues 1276–1285 (SYDSDLQPSE) the composition is skewed to polar residues. Acidic residues predominate over residues 1288–1302 (YDVDEPNYDFDEPNY). Residues 1309–1323 (SEPQFEPQVEQQPGE) are compositionally biased toward low complexity. 2 repeat units span residues 1310-1339 (EPQF…SPVE) and 1358-1389 (EIQP…SPVE). The segment covering 1353-1380 (VQTQPEIQPVESQPEATFDTVQPEQTPQ) has biased composition (polar residues). The segment covering 1392–1406 (QEPQVSSEPEVVVQP) has biased composition (low complexity). Residues 1416–1433 (VLEEPQADEIQPEASEEE) show a composition bias toward acidic residues.

Its function is as follows. Could be an accessory structural component in cytadherence. This chain is Protein P200, found in Mycoplasma genitalium (strain ATCC 33530 / DSM 19775 / NCTC 10195 / G37) (Mycoplasmoides genitalium).